Consider the following 367-residue polypeptide: Phosphoribosylaminoimidazole-succinocarboxamide synthase (367 aa).

Belongs to the SAICAR synthetase family.

The enzyme catalyses 5-amino-1-(5-phospho-D-ribosyl)imidazole-4-carboxylate + L-aspartate + ATP = (2S)-2-[5-amino-1-(5-phospho-beta-D-ribosyl)imidazole-4-carboxamido]succinate + ADP + phosphate + 2 H(+). Its pathway is purine metabolism; IMP biosynthesis via de novo pathway; 5-amino-1-(5-phospho-D-ribosyl)imidazole-4-carboxamide from 5-amino-1-(5-phospho-D-ribosyl)imidazole-4-carboxylate: step 1/2. The protein is Phosphoribosylaminoimidazole-succinocarboxamide synthase of Psychromonas ingrahamii (strain DSM 17664 / CCUG 51855 / 37).